A 627-amino-acid chain; its full sequence is Altered inheritance of mitochondria protein 9, mitochondrial (627 aa).

The N-terminal 43 residues, 1 to 43 (MIRYTVAGHSRRCVVGASKRVGAIKCITVAATKRFISNKPNEV), are a transit peptide targeting the mitochondrion.

The protein belongs to the AIM9 family.

The protein localises to the mitochondrion. The sequence is that of Altered inheritance of mitochondria protein 9, mitochondrial (AIM9) from Saccharomyces cerevisiae (strain ATCC 204508 / S288c) (Baker's yeast).